Reading from the N-terminus, the 233-residue chain is Uracil-DNA glycosylase (233 aa).

Residue aspartate 70 is the Proton acceptor of the active site.

The protein belongs to the uracil-DNA glycosylase (UDG) superfamily. UNG family.

The protein resides in the cytoplasm. It catalyses the reaction Hydrolyzes single-stranded DNA or mismatched double-stranded DNA and polynucleotides, releasing free uracil.. Functionally, excises uracil residues from the DNA which can arise as a result of misincorporation of dUMP residues by DNA polymerase or due to deamination of cytosine. The protein is Uracil-DNA glycosylase of Oleidesulfovibrio alaskensis (strain ATCC BAA-1058 / DSM 17464 / G20) (Desulfovibrio alaskensis).